Consider the following 201-residue polypeptide: Charged multivesicular body protein 6 (201 aa).

Residue G2 is the site of N-myristoyl glycine attachment. Residues 10–145 (QSRVTEQDKA…YQRQIDELLA (136 aa)) are a coiled coil. Position 119 is a phosphoserine (S119). T130 is subject to Phosphothreonine. The Type-2 MIT-interacting motif signature appears at 168–179 (IELPEVPSEPLP). The disordered stretch occupies residues 171-201 (PEVPSEPLPEKIPEDVPVKARPRQAELVAAS). A compositionally biased stretch (basic and acidic residues) spans 178-188 (LPEKIPEDVPV).

This sequence belongs to the SNF7 family. In terms of assembly, probable core component of the endosomal sorting required for transport complex III (ESCRT-III). ESCRT-III components are thought to multimerize to form a flat lattice on the perimeter membrane of the endosome. Several assembly forms of ESCRT-III may exist that interact and act sequentially. Interacts with VPS4A; the interaction is direct. Interacts with VPS4B; the interaction is direct. Interacts with CHMP4A, CHMP4B and CHMP4C. Interacts with SNF8, VPS25 and VPS36. In terms of processing, ISGylated in a CHMP5-dependent manner. Isgylation weakens its interaction with VPS4A.

The protein localises to the endomembrane system. It localises to the endosome membrane. It is found in the late endosome membrane. The protein resides in the membrane. Probable core component of the endosomal sorting required for transport complex III (ESCRT-III) which is involved in multivesicular bodies (MVBs) formation and sorting of endosomal cargo proteins into MVBs. MVBs contain intraluminal vesicles (ILVs) that are generated by invagination and scission from the limiting membrane of the endosome and mostly are delivered to lysosomes enabling degradation of membrane proteins, such as stimulated growth factor receptors, lysosomal enzymes and lipids. The MVB pathway appears to require the sequential function of ESCRT-O, -I,-II and -III complexes. ESCRT-III proteins mostly dissociate from the invaginating membrane before the ILV is released. The ESCRT machinery also functions in topologically equivalent membrane fission events, such as the terminal stages of cytokinesis and the budding of enveloped viruses (lentiviruses). ESCRT-III proteins are believed to mediate the necessary vesicle extrusion and/or membrane fission activities, possibly in conjunction with the AAA ATPase VPS4. In the ESCRT-III complex, it probably serves as an acceptor for the ESCRT-II complex on endosomal membrane. The polypeptide is Charged multivesicular body protein 6 (CHMP6) (Pongo abelii (Sumatran orangutan)).